Here is a 320-residue protein sequence, read N- to C-terminus: Aspartate carbamoyltransferase catalytic subunit (320 aa).

Carbamoyl phosphate is bound by residues arginine 58 and threonine 59. L-aspartate is bound at residue lysine 86. Carbamoyl phosphate is bound by residues arginine 108, histidine 136, and glutamine 139. 2 residues coordinate L-aspartate: arginine 169 and arginine 223. Positions 264 and 265 each coordinate carbamoyl phosphate.

The protein belongs to the aspartate/ornithine carbamoyltransferase superfamily. ATCase family. As to quaternary structure, heterododecamer (2C3:3R2) of six catalytic PyrB chains organized as two trimers (C3), and six regulatory PyrI chains organized as three dimers (R2).

The catalysed reaction is carbamoyl phosphate + L-aspartate = N-carbamoyl-L-aspartate + phosphate + H(+). The protein operates within pyrimidine metabolism; UMP biosynthesis via de novo pathway; (S)-dihydroorotate from bicarbonate: step 2/3. In terms of biological role, catalyzes the condensation of carbamoyl phosphate and aspartate to form carbamoyl aspartate and inorganic phosphate, the committed step in the de novo pyrimidine nucleotide biosynthesis pathway. This chain is Aspartate carbamoyltransferase catalytic subunit, found in Cereibacter sphaeroides (strain ATCC 17029 / ATH 2.4.9) (Rhodobacter sphaeroides).